A 148-amino-acid chain; its full sequence is uncharacterized protein (148 aa).

The N-terminal stretch at 1–22 (MVQTVLNSVWLWRSVLLRLTFS) is a signal peptide.

This is an uncharacterized protein from Saccharomyces cerevisiae (strain ATCC 204508 / S288c) (Baker's yeast).